Here is a 458-residue protein sequence, read N- to C-terminus: Protein amnionless (458 aa).

A signal peptide spans 1-19; that stretch reads MGALGRVLLWLQLCAMTRA. Over 20–362 the chain is Extracellular; sequence AYKLWVPNTS…ELNQSSSGAG (343 aa). Residue Asn-27 is glycosylated (N-linked (GlcNAc...) asparagine). Intrachain disulfides connect Cys-43/Cys-96, Cys-137/Cys-213, Cys-205/Cys-211, Cys-223/Cys-249, Cys-234/Cys-250, and Cys-239/Cys-253. The segment at 67–87 is interaction with CUBN; sequence SDMLLPLDGELVLASGAALSA. The VWFC domain occupies 203-254; that stretch reads QACTDASGCVCGNAEMLPWICASLLQPLGGRCPQAACQDPLLPQGQCCDLCG. Asn-355 carries an N-linked (GlcNAc...) asparagine glycan. A helical membrane pass occupies residues 363-383; the sequence is LAGGVAALVLLALLGTVLLLL. At 384–458 the chain is on the cytoplasmic side; it reads HRSGRLRWRR…LFAGEAEAEA (75 aa).

Interacts (via extracellular region) with CUBN/cubilin. This gives rise to a huge complex containing one AMN chain and three CUBN chains. In terms of processing, N-glycosylated. Post-translationally, a soluble form arises by proteolytic removal of the membrane anchor. In terms of tissue distribution, expressed in polarized epithelial cells which are specialized in resorption or transport, specifically kidney proximal tubules and intestinal epithelium.

It localises to the apical cell membrane. The protein localises to the cell membrane. Its subcellular location is the endosome membrane. The protein resides in the membrane. It is found in the coated pit. Membrane-bound component of the endocytic receptor formed by AMN and CUBN. Required for normal CUBN glycosylation and trafficking to the cell surface. The complex formed by AMN and CUBN is required for efficient absorption of vitamin B12. Required for normal CUBN-mediated protein transport in the kidney. This chain is Protein amnionless (Amn), found in Mus musculus (Mouse).